We begin with the raw amino-acid sequence, 739 residues long: Platelet endothelial cell adhesion molecule (739 aa).

The N-terminal stretch at 1 to 27 (MQLRWTQRGMMWLGALLTLLLCSSLKG) is a signal peptide. Over 28-599 (QENSFTINSI…TVRVYLPLEK (572 aa)) the chain is Extracellular. Ig-like C2-type domains lie at 35–120 (NSIH…EKTT), 145–213 (GGVV…IFSG), and 236–315 (PKFH…SKVS). N-linked (GlcNAc...) asparagine glycosylation is found at Asn52, Asn84, and Asn151. The cysteines at positions 57 and 109 are disulfide-linked. 2 disulfide bridges follow: Cys152/Cys206 and Cys256/Cys304. N-linked (GlcNAc...) asparagine glycans are attached at residues Asn301, Asn320, Asn356, Asn371, Asn435, Asn446, Asn453, Asn550, and Asn578. Ig-like C2-type domains follow at residues 328 to 403 (PKLE…VQIT), 424 to 493 (GQTI…EVLR), and 499 to 590 (PVDE…NTLT). 3 disulfides stabilise this stretch: Cys347-Cys386, Cys431-Cys476, and Cys522-Cys571. The chain crosses the membrane as a helical span at residues 600 to 618 (GLIAVVVIGVIIVTLVLGA). Residues 619–739 (KCYFLKKAKA…SRTEGSLDGS (121 aa)) are Cytoplasmic-facing. A lipid anchor (S-palmitoyl cysteine) is attached at Cys620. Short sequence motifs (ITIM motif) lie at residues 687–692 (VEYTEV) and 712–717 (TVYSEI). Phosphotyrosine; by FER occurs at positions 689 and 714. The tract at residues 708–730 (TETETVYSEIRKADPDFVENRYS) is membrane-bound segment which detaches upon phosphorylation. The tract at residues 722–739 (PDFVENRYSRTEGSLDGS) is may play a role in cytoprotective signaling. Residues Ser730 and Ser735 each carry the phosphoserine modification.

In terms of assembly, trans-homodimer (via Ig-like C2-type 1 and Ig-like C2-type 2 domains); trans-homodimerization is required for cell-cell interaction. Forms a complex with BDKRB2 and GNAQ. Interacts with BDKRB2 and GNAQ. Interacts with PTPN11; Tyr-714 is critical for PTPN11 recruitment. Interacts with FER. Interacts with CD177; the interaction is Ca(2+)-dependent; the interaction is direct. Post-translationally, phosphorylated on Ser and Tyr residues by src kinases after cellular activation. Upon activation, phosphorylated on Ser-730 which probably initiates the dissociation of the membrane-interaction segment (residues 708-730) from the cell membrane allowing the sequential phosphorylation of Tyr-714 and Tyr-689. Constitutively phosphorylated on Ser-735 in resting platelets. Phosphorylated on tyrosine residues by FER and FES in response to FCER1 activation. In endothelial cells Fyn mediates mechanical-force (stretch or pull) induced tyrosine phosphorylation. Palmitoylation by ZDHHC21 is necessary for cell surface expression in endothelial cells and enrichment in membrane rafts.

It is found in the cell membrane. The protein resides in the membrane raft. Its subcellular location is the cell junction. Functionally, cell adhesion molecule which is required for leukocyte transendothelial migration (TEM) under most inflammatory conditions. Tyr-689 plays a critical role in TEM and is required for efficient trafficking of PECAM1 to and from the lateral border recycling compartment (LBRC) and is also essential for the LBRC membrane to be targeted around migrating leukocytes. Trans-homophilic interaction may play a role in endothelial cell-cell adhesion via cell junctions. Heterophilic interaction with CD177 plays a role in transendothelial migration of neutrophils. Homophilic ligation of PECAM1 prevents macrophage-mediated phagocytosis of neighboring viable leukocytes by transmitting a detachment signal. Promotes macrophage-mediated phagocytosis of apoptotic leukocytes by tethering them to the phagocytic cells; PECAM1-mediated detachment signal appears to be disabled in apoptotic leukocytes. Modulates bradykinin receptor BDKRB2 activation. Regulates bradykinin- and hyperosmotic shock-induced ERK1/2 activation in endothelial cells. Induces susceptibility to atherosclerosis. This chain is Platelet endothelial cell adhesion molecule (PECAM1), found in Bos taurus (Bovine).